Here is a 106-residue protein sequence, read N- to C-terminus: Iron-sulfur cluster assembly protein CyaY (106 aa).

Belongs to the frataxin family.

Functionally, involved in iron-sulfur (Fe-S) cluster assembly. May act as a regulator of Fe-S biogenesis. In Yersinia pestis bv. Antiqua (strain Antiqua), this protein is Iron-sulfur cluster assembly protein CyaY.